Consider the following 1177-residue polypeptide: DNA-directed RNA polymerase subunit beta' (1177 aa).

Residues Cys-60, Cys-62, Cys-75, and Cys-78 each contribute to the Zn(2+) site. 3 residues coordinate Mg(2+): Asp-450, Asp-452, and Asp-454. Residues Cys-795, Cys-869, Cys-876, and Cys-879 each coordinate Zn(2+).

This sequence belongs to the RNA polymerase beta' chain family. In terms of assembly, the RNAP catalytic core consists of 2 alpha, 1 beta, 1 beta' and 1 omega subunit. When a sigma factor is associated with the core the holoenzyme is formed, which can initiate transcription. The cofactor is Mg(2+). Requires Zn(2+) as cofactor.

It catalyses the reaction RNA(n) + a ribonucleoside 5'-triphosphate = RNA(n+1) + diphosphate. In terms of biological role, DNA-dependent RNA polymerase catalyzes the transcription of DNA into RNA using the four ribonucleoside triphosphates as substrates. The sequence is that of DNA-directed RNA polymerase subunit beta' from Clostridium botulinum (strain Alaska E43 / Type E3).